The chain runs to 642 residues: MAFGSLSSLGFGSGVLTQDTIDKLKEAEQKARIDPYTKKIEENTTKQKDLTEIKTKLLSFQTAVSSLADATVFAKRKVVGSISDNPPASLTVNSGVALQSMNINVTQLAQKDVYQSKGLANDGGFVNAQLNGTADLTFFSNGKEYTVTVDKNTTYRDLADKINEASGGEIVAKIVNTGEKGTPYRLTLTSKETGEDSAISFYAGKKDSNGKYQKDINAEKIFDDLGWGLDVSASIDPDKDKKGYGIKDASLHIQTAQNAEFTLDGIKMFRSSNTVTDLGVGMTLTLNKTGEINFDVQQDFEGVTKAMQDLVDAYNDLVTNLNAATDYNSETGTKGTLQGISEVNSIRSSILADLFDSQVVDGTTEDANGNKVNTKVMLSMQDFGLSLNDAGTLSFDSSKFEQKVKEDPDSTESFFSNITKYEDINHTGEVIKTGSLSKYLNSNGGNTNGLEFKPGDFTIVFNNQTYDLSKNSDGTNFKLTGKTEEELLQNLANHINSKGIEGLKVKVESYNQNNVTGFRLNFSGDGSSDFSIKGDANILKELGLSDVNITSKPIEGKGIFSKLKATLQEMTGKDGSITKYDESLTNDIKSLNTSKDSTQAMIDTRYDTMANQWLQYESILNKLNQQLNTVTNMINAANNSNN.

Positions 614-641 form a coiled coil; that stretch reads LQYESILNKLNQQLNTVTNMINAANNSN.

It belongs to the FliD family. As to quaternary structure, homopentamer.

The protein localises to the secreted. The protein resides in the bacterial flagellum. Required for the morphogenesis and for the elongation of the flagellar filament by facilitating polymerization of the flagellin monomers at the tip of growing filament. Forms a capping structure, which prevents flagellin subunits (transported through the central channel of the flagellum) from leaking out without polymerization at the distal end. The sequence is that of Flagellar hook-associated protein 2 (fliD) from Campylobacter jejuni subsp. jejuni serotype O:2 (strain ATCC 700819 / NCTC 11168).